A 172-amino-acid polypeptide reads, in one-letter code: Adenine phosphoribosyltransferase (172 aa).

This sequence belongs to the purine/pyrimidine phosphoribosyltransferase family. In terms of assembly, homodimer.

The protein localises to the cytoplasm. It catalyses the reaction AMP + diphosphate = 5-phospho-alpha-D-ribose 1-diphosphate + adenine. It participates in purine metabolism; AMP biosynthesis via salvage pathway; AMP from adenine: step 1/1. Catalyzes a salvage reaction resulting in the formation of AMP, that is energically less costly than de novo synthesis. The sequence is that of Adenine phosphoribosyltransferase from Streptococcus equi subsp. zooepidemicus (strain H70).